Here is a 368-residue protein sequence, read N- to C-terminus: CST complex subunit STN1 (368 aa).

Positions 1 to 185 (MQPGSSRCEE…KVYDQPFHSS (185 aa)) are interaction with CTC1. Residues 57–155 (VDVLGTVIGV…EIHATTYYKV (99 aa)) constitute a DNA-binding region (OB). Winged helix-turn-helix (wHTH) regions lie at residues 191–295 (EALS…YVTR) and 296–368 (EDKD…YTAF).

This sequence belongs to the STN1 family. As to quaternary structure, component of the CST complex, composed of TEN1/C17orf106, CTC1/C17orf68 and STN1; in the complex interacts directly with TEN1 and CTC1. Interacts with ACD/TPP1, POT1 and POLA1.

The protein localises to the nucleus. The protein resides in the chromosome. It localises to the telomere. Its function is as follows. Component of the CST complex proposed to act as a specialized replication factor promoting DNA replication under conditions of replication stress or natural replication barriers such as the telomere duplex. The CST complex binds single-stranded DNA with high affinity in a sequence-independent manner, while isolated subunits bind DNA with low affinity by themselves. Initially the CST complex has been proposed to protect telomeres from DNA degradation. However, the CST complex has been shown to be involved in several aspects of telomere replication. The CST complex inhibits telomerase and is involved in telomere length homeostasis; it is proposed to bind to newly telomerase-synthesized 3' overhangs and to terminate telomerase action implicating the association with the ACD:POT1 complex thus interfering with its telomerase stimulation activity. The CST complex is also proposed to be involved in fill-in synthesis of the telomeric C-strand probably implicating recruitment and activation of DNA polymerase alpha. The CST complex facilitates recovery from many forms of exogenous DNA damage; seems to be involved in the re-initiation of DNA replication at repaired forks and/or dormant origins. Required for efficicient replication of the duplex region of the telomere. Promotes efficient replication of lagging-strand telomeres. Promotes general replication start following replication-fork stalling implicating new origin firing. May be in involved in C-strand fill-in during late S/G2 phase independent of its role in telomere duplex replication. Component of the CST complex, a complex that binds to single-stranded DNA and is required to protect telomeres from DNA degradation. The CST complex binds single-stranded DNA with high affinity in a sequence-independent manner, while isolated subunits bind DNA with low affinity by themselves. In addition to telomere protection, the CST complex has probably a more general role in DNA metabolism at non-telomeric sites. This is CST complex subunit STN1 from Homo sapiens (Human).